The primary structure comprises 485 residues: uncharacterized protein (485 aa).

It is found in the virion. This is an uncharacterized protein from Acanthamoeba polyphaga mimivirus (APMV).